The following is a 500-amino-acid chain: Perfringolysin O (500 aa).

Residues 1–28 (MIRFKKTKLIASIAMALCLFSQPVISFS) form the signal peptide. Beta stranded transmembrane passes span 189–202 (KSQI…NAKV), 209–218 (VDFNAVANNE), 287–296 (SKDVQAAFKA), and 304–316 (KNSQ…YENS). Residues 458–468 (ECTGLAWEWWR) carry the Conserved undecapeptide motif. Residues 490–491 (TL) carry the Cholesterol binding motif.

It belongs to the cholesterol-dependent cytolysin family. Homooligomeric pore complex of 35 to 50 subunits; when inserted in the host membrane.

The protein localises to the secreted. The protein resides in the host cell membrane. A cholesterol-dependent toxin that causes cytolysis by forming pores in cholesterol containing host membranes. After binding to target membranes, the protein assembles into a pre-pore complex. A conformation change leads to insertion in the host membrane and formation of an oligomeric pore complex. Cholesterol is required for binding to host cell membranes, membrane insertion and pore formation; cholesterol binding is mediated by a Thr-Leu pair in the C-terminus. Can be reversibly inactivated by oxidation. The sequence is that of Perfringolysin O (pfo) from Clostridium perfringens (strain ATCC 13124 / DSM 756 / JCM 1290 / NCIMB 6125 / NCTC 8237 / Type A).